The following is a 215-amino-acid chain: Probable GTP-binding protein EngB (215 aa).

The EngB-type G domain maps to 30–204 (EGLEVAFAGR…QMVLAQWLGL (175 aa)). GTP contacts are provided by residues 38-45 (GRSNAGKS), 64-68 (GRTQL), 82-85 (DLPG), 149-152 (TKAD), and 182-185 (LFSA). The Mg(2+) site is built by S45 and T66.

This sequence belongs to the TRAFAC class TrmE-Era-EngA-EngB-Septin-like GTPase superfamily. EngB GTPase family. It depends on Mg(2+) as a cofactor.

Necessary for normal cell division and for the maintenance of normal septation. The sequence is that of Probable GTP-binding protein EngB from Pseudomonas aeruginosa (strain ATCC 15692 / DSM 22644 / CIP 104116 / JCM 14847 / LMG 12228 / 1C / PRS 101 / PAO1).